A 299-amino-acid polypeptide reads, in one-letter code: tRNA dimethylallyltransferase (299 aa).

11-18 (GPTGSGKS) contacts ATP. 13-18 (TGSGKS) contributes to the substrate binding site.

It belongs to the IPP transferase family. As to quaternary structure, monomer. Mg(2+) is required as a cofactor.

The catalysed reaction is adenosine(37) in tRNA + dimethylallyl diphosphate = N(6)-dimethylallyladenosine(37) in tRNA + diphosphate. Catalyzes the transfer of a dimethylallyl group onto the adenine at position 37 in tRNAs that read codons beginning with uridine, leading to the formation of N6-(dimethylallyl)adenosine (i(6)A). This chain is tRNA dimethylallyltransferase, found in Pseudarthrobacter chlorophenolicus (strain ATCC 700700 / DSM 12829 / CIP 107037 / JCM 12360 / KCTC 9906 / NCIMB 13794 / A6) (Arthrobacter chlorophenolicus).